The primary structure comprises 479 residues: Leucine-rich repeat-containing protein 74A (479 aa).

Residues 1–10 show a composition bias toward acidic residues; that stretch reads MDDDDIEPLE. Positions 1–29 are disordered; sequence MDDDDIEPLEYETKDETEAALAPQSSEDT. 8 LRR repeats span residues 119–140, 147–167, 176–197, 204–225, 232–253, 260–281, 288–309, and 316–336; these read TVLK…SLME, YLQE…RIIS, SLWK…LLCQ, RIRS…YLGQ, GLQS…ALCN, TLKK…ALGD, CLVY…RISK, and CLQV…YSLI.

This is Leucine-rich repeat-containing protein 74A from Rattus norvegicus (Rat).